The chain runs to 277 residues: Sulfur carrier protein FdhD (277 aa).

Residue Cys123 is the Cysteine persulfide intermediate of the active site.

It belongs to the FdhD family.

Its subcellular location is the cytoplasm. Functionally, required for formate dehydrogenase (FDH) activity. Acts as a sulfur carrier protein that transfers sulfur from IscS to the molybdenum cofactor prior to its insertion into FDH. In Pectobacterium atrosepticum (strain SCRI 1043 / ATCC BAA-672) (Erwinia carotovora subsp. atroseptica), this protein is Sulfur carrier protein FdhD.